The following is a 46-amino-acid chain: Large ribosomal subunit protein bL34 (46 aa).

The protein belongs to the bacterial ribosomal protein bL34 family.

The polypeptide is Large ribosomal subunit protein bL34 (Synechococcus sp. (strain JA-2-3B'a(2-13)) (Cyanobacteria bacterium Yellowstone B-Prime)).